The following is a 438-amino-acid chain: Acyl-CoA dehydrogenase apdG (438 aa).

This sequence belongs to the acyl-CoA dehydrogenase family. FAD is required as a cofactor.

It functions in the pathway secondary metabolite biosynthesis. In terms of biological role, acyl-CoA dehydrogenase; part of the gene cluster that mediates the biosynthesis of aspyridones. The polyketide-amino acid backbone preaspyridone A is first assembled by the PKS-NRPS hybrid apdA. The assembly of preaspyridone A is initiated by loading of malonyl-CoA onto apdA, followed by decarboxylation to yield the acetyl starter unit. The growing polyketide chain then elongates into a tetraketide. The adpA PKS module catalyzes three Claisen condensations, as well as beta-keto processing and methylation. Alpha-methylation step during polyketide synthesis is a prerequisite and a key checkpoint for chain transfer between PKS and NRPS modules. The downstream NRPS module contains the condensation (C), adenylation (A), and thiolation (T) domains and catalyzes the incorporation of tyrosine via the formation of the L-tyrosinyl-thioester and the amide linkage between L-tyrosinyl-thioester and the tetraketide. The bimodular assembly line is terminated with a reductase (R) domain that facilitates formation and release of the tetramic acid product. Because apdA lacks a designated enoylreductase (ER) domain, the required activity is provided the enoyl reductase apdC. ApdC appears to operate with different stereoselectivity in different PKS cycle. Combined with apdC, apdA is proposed to synthesize preaspyridone A via about 20 enzymatic steps. A number of oxidative steps performed successively by the cytochrome P450 monooxygenases apdE and apdB are required for the conversion of preaspyridone A to aspyridone A. The cytochrome P450 monooxygenase apdE is responsible for the oxidative dephenylation of preaspyridone A. Finally, the predicted FAD-dependent monooxygenase apdD and the acyl-CoA dehydrogenase apdG may be involved in the transformation of aspyridone A into aspyridone B. The chain is Acyl-CoA dehydrogenase apdG from Emericella nidulans (strain FGSC A4 / ATCC 38163 / CBS 112.46 / NRRL 194 / M139) (Aspergillus nidulans).